The sequence spans 857 residues: Protein translocase subunit SecA (857 aa).

ATP contacts are provided by residues Q88, 106–110 (GEGKT), and D496. Zn(2+)-binding residues include C833, C835, C844, and C845.

The protein belongs to the SecA family. In terms of assembly, monomer and homodimer. Part of the essential Sec protein translocation apparatus which comprises SecA, SecYEG and auxiliary proteins SecDF-YajC and YidC. It depends on Zn(2+) as a cofactor.

It localises to the cell inner membrane. The protein resides in the cytoplasm. It catalyses the reaction ATP + H2O + cellular proteinSide 1 = ADP + phosphate + cellular proteinSide 2.. Its function is as follows. Part of the Sec protein translocase complex. Interacts with the SecYEG preprotein conducting channel. Has a central role in coupling the hydrolysis of ATP to the transfer of proteins into and across the cell membrane, serving as an ATP-driven molecular motor driving the stepwise translocation of polypeptide chains across the membrane. The sequence is that of Protein translocase subunit SecA from Sulfurimonas denitrificans (strain ATCC 33889 / DSM 1251) (Thiomicrospira denitrificans (strain ATCC 33889 / DSM 1251)).